The sequence spans 250 residues: Probable transcriptional regulatory protein Plut_1643 (250 aa).

The protein belongs to the TACO1 family.

It localises to the cytoplasm. The chain is Probable transcriptional regulatory protein Plut_1643 from Chlorobium luteolum (strain DSM 273 / BCRC 81028 / 2530) (Pelodictyon luteolum).